A 340-amino-acid chain; its full sequence is NAC domain-containing protein 89 (340 aa).

In terms of domain architecture, NAC spans 21–164 (VFPGFKFSPT…AMVVCRVRRN (144 aa)). Residues 119–170 (IGTKRTLVFHIGRAPKGERTDWIMHEYCVKGVSLDDAMVVCRVRRNKEYNSG) mediate DNA binding. Residues 167 to 181 (YNSGTSQKAPKPNSS) are compositionally biased toward polar residues. The disordered stretch occupies residues 167-198 (YNSGTSQKAPKPNSSAEKHAKVQNGATSSGSP).

As to quaternary structure, interacts with PAS1.

The protein resides in the cytoplasm. It is found in the nucleus. In terms of biological role, transcription factor involved in plant cell division. This is NAC domain-containing protein 89 (NAC089) from Arabidopsis thaliana (Mouse-ear cress).